The primary structure comprises 262 residues: Ribosome maturation factor RimP (262 aa).

The segment at 197–262 (RELGVLPPPP…LGQTDPTEGD (66 aa)) is disordered. Over residues 223-233 (KLPKAKLKAAK) the composition is skewed to basic residues. A compositionally biased stretch (basic and acidic residues) spans 240 to 254 (TKEHRLAAAERKRLG).

This sequence belongs to the RimP family.

Its subcellular location is the cytoplasm. Required for maturation of 30S ribosomal subunits. The chain is Ribosome maturation factor RimP from Rhodopseudomonas palustris (strain BisB18).